A 156-amino-acid polypeptide reads, in one-letter code: Lipoprotein signal peptidase (156 aa).

A run of 3 helical transmembrane segments spans residues 5–25, 64–84, and 89–109; these read FKFI…DQWV, YLHL…KTLL, and IAFG…FIHG. Active-site residues include Asp-113 and Asp-130. Residues 122 to 142 form a helical membrane-spanning segment; that stretch reads NFAIFNVADVMINISVALILI.

Belongs to the peptidase A8 family.

Its subcellular location is the cell inner membrane. The enzyme catalyses Release of signal peptides from bacterial membrane prolipoproteins. Hydrolyzes -Xaa-Yaa-Zaa-|-(S,diacylglyceryl)Cys-, in which Xaa is hydrophobic (preferably Leu), and Yaa (Ala or Ser) and Zaa (Gly or Ala) have small, neutral side chains.. Its pathway is protein modification; lipoprotein biosynthesis (signal peptide cleavage). In terms of biological role, this protein specifically catalyzes the removal of signal peptides from prolipoproteins. The polypeptide is Lipoprotein signal peptidase (Campylobacter jejuni subsp. jejuni serotype O:6 (strain 81116 / NCTC 11828)).